The sequence spans 147 residues: Hemoglobin subunit delta (147 aa).

Positions 3 to 147 constitute a Globin domain; it reads NLTAAEKTQV…VANALAHKYH (145 aa). Residues His-64 and His-93 each coordinate heme b.

This sequence belongs to the globin family. As to quaternary structure, heterotetramer of two delta chains and two alpha chains. As to expression, red blood cells.

The chain is Hemoglobin subunit delta (HBD) from Elephas maximus (Indian elephant).